Here is a 468-residue protein sequence, read N- to C-terminus: bZIP transcription factor 14 (468 aa).

Disordered stretches follow at residues 55-149 and 234-272; these read SRRK…EGRA and SPQSMSDGGGEEVASTSDVSGDEQQVPDDGIDYDLLGKD. Composition is skewed to low complexity over residues 64 to 82 and 95 to 106; these read SFVSGSDSSRSSTKSSSGS and VTAASTESVSSS. The span at 112–128 shows a compositional bias: basic and acidic residues; that stretch reads KKADTDDRVQRSRERNR. Residues 117–165 form the bZIP 1 domain; sequence DDRVQRSRERNRIHARKTRQRKKEQMQSLEGRATDLKHEQIRLKQIINE. A basic motif 1 region spans residues 119 to 139; it reads RVQRSRERNRIHARKTRQRKK. The span at 129–138 shows a compositional bias: basic residues; sequence IHARKTRQRK. Positions 145 to 159 are leucine-zipper 1; that stretch reads LEGRATDLKHEQIRL. Polar residues predominate over residues 247-256; sequence ASTSDVSGDE. A bZIP 2 domain is found at 279 to 333; it reads EELDQIRRERNRMHAKRTRDRKRIFTEEMAEMCRILEEENHLLRVHLGGLDSDFK. A basic motif 2 region spans residues 285–312; it reads RRERNRMHAKRTRDRKRIFTEEMAEMCR. Residues 313 to 320 are leucine-zipper 2; that stretch reads ILEEENHL. A disordered region spans residues 400 to 468; that stretch reads ERQQREAERK…TTSLAAPVGW (69 aa). Basic and acidic residues predominate over residues 401–410; the sequence is RQQREAERKV. Residues 417–426 are compositionally biased toward low complexity; it reads SAASDTSTSD.

The protein belongs to the bZIP family.

It is found in the nucleus. Transcriptional activator which binds to the C-box-like motif 5'-TGACGT-3' and A-box-like motif 5'-GTACGTA-3' of target promoters to positively regulate the expression of genes involved in the tricarboxylic acid (TCA) cycle in response to nitrogen starvation. May also regulate the TCA cycle during day-to-night transitions. This chain is bZIP transcription factor 14, found in Phaeodactylum tricornutum (strain CCAP 1055/1).